Reading from the N-terminus, the 235-residue chain is Thiopurine S-methyltransferase (235 aa).

The S-adenosyl-L-methionine site is built by tryptophan 13, leucine 48, glutamate 69, and arginine 126. The segment at 199-235 (PDPQNGAPRRVEHKVYQLTGKRPASPEADGRAAETED) is disordered. The span at 226–235 (ADGRAAETED) shows a compositional bias: basic and acidic residues.

This sequence belongs to the class I-like SAM-binding methyltransferase superfamily. TPMT family.

The protein resides in the cytoplasm. It catalyses the reaction S-adenosyl-L-methionine + a thiopurine = S-adenosyl-L-homocysteine + a thiopurine S-methylether.. In Stutzerimonas stutzeri (strain A1501) (Pseudomonas stutzeri), this protein is Thiopurine S-methyltransferase.